A 363-amino-acid chain; its full sequence is UDP-N-acetylglucosamine--N-acetylmuramyl-(pentapeptide) pyrophosphoryl-undecaprenol N-acetylglucosamine transferase (363 aa).

UDP-N-acetyl-alpha-D-glucosamine-binding positions include Thr-13–Gly-15, Asn-125, Arg-166, Ser-195, Ile-249, Ala-268–Glu-273, and Gln-294.

It belongs to the glycosyltransferase 28 family. MurG subfamily.

It localises to the cell inner membrane. It carries out the reaction di-trans,octa-cis-undecaprenyl diphospho-N-acetyl-alpha-D-muramoyl-L-alanyl-D-glutamyl-meso-2,6-diaminopimeloyl-D-alanyl-D-alanine + UDP-N-acetyl-alpha-D-glucosamine = di-trans,octa-cis-undecaprenyl diphospho-[N-acetyl-alpha-D-glucosaminyl-(1-&gt;4)]-N-acetyl-alpha-D-muramoyl-L-alanyl-D-glutamyl-meso-2,6-diaminopimeloyl-D-alanyl-D-alanine + UDP + H(+). It functions in the pathway cell wall biogenesis; peptidoglycan biosynthesis. In terms of biological role, cell wall formation. Catalyzes the transfer of a GlcNAc subunit on undecaprenyl-pyrophosphoryl-MurNAc-pentapeptide (lipid intermediate I) to form undecaprenyl-pyrophosphoryl-MurNAc-(pentapeptide)GlcNAc (lipid intermediate II). This chain is UDP-N-acetylglucosamine--N-acetylmuramyl-(pentapeptide) pyrophosphoryl-undecaprenol N-acetylglucosamine transferase, found in Cellvibrio japonicus (strain Ueda107) (Pseudomonas fluorescens subsp. cellulosa).